Here is a 508-residue protein sequence, read N- to C-terminus: Probable G-protein coupled receptor 101 (508 aa).

Topologically, residues 1 to 35 are extracellular; the sequence is MTSTCTNSTRESNSSHTCMPLSKMPISLAHGIIRS. N-linked (GlcNAc...) asparagine glycans are attached at residues Asn-7 and Asn-13. A helical membrane pass occupies residues 36–56; it reads TVLVIFLAASFVGNIVLALVL. Residues 57 to 68 lie on the Cytoplasmic side of the membrane; sequence QRKPQLLQVTNR. The helical transmembrane segment at 69–89 threads the bilayer; it reads FIFNLLVTDLLQISLVAPWVV. At 90 to 106 the chain is on the extracellular side; the sequence is ATSVPLFWPLNSHFCTA. A disulfide bond links Cys-104 and Cys-182. Residues 107-127 traverse the membrane as a helical segment; it reads LVSLTHLFAFASVNTIVVVSV. The Cytoplasmic segment spans residues 128–149; sequence DRYLSIIHPLSYPSKMTQRRGY. The helical transmembrane segment at 150–170 threads the bilayer; the sequence is LLLYGTWIVAILQSTPPLYGW. Residues 171–196 lie on the Extracellular side of the membrane; the sequence is GQAAFDERNALCSMIWGASPSYTILS. The helical transmembrane segment at 197–217 threads the bilayer; the sequence is VVSFIVIPLIVMIACYSVVFC. The Cytoplasmic portion of the chain corresponds to 218-399; the sequence is AARRQHALLY…PRCYQCKAAK (182 aa). Positions 244-338 are disordered; sequence NEDEEGAEKK…ENSMKADKGR (95 aa). Basic and acidic residues-rich tracts occupy residues 250-288 and 318-338; these read AEKK…KAKE and MEGK…DKGR. A helical transmembrane segment spans residues 400–420; that stretch reads VIFIIIFSYVLSLGPYCFLAV. Residues 421–433 are Extracellular-facing; the sequence is LAVWVDVETQVPQ. A helical transmembrane segment spans residues 434–454; that stretch reads WVITIIIWLFFLQCCIHPYVY. Residues 455-508 lie on the Cytoplasmic side of the membrane; the sequence is GYMHKTIKKEIQDMLKKFFCKEKPPKEDSHPDLPGTEGGTEGKIVPSYDSATFP. The span at 476–485 shows a compositional bias: basic and acidic residues; it reads EKPPKEDSHP. A disordered region spans residues 476–508; it reads EKPPKEDSHPDLPGTEGGTEGKIVPSYDSATFP.

This sequence belongs to the G-protein coupled receptor 1 family.

It is found in the cell membrane. Orphan receptor. This is Probable G-protein coupled receptor 101 (GPR101) from Homo sapiens (Human).